Here is a 711-residue protein sequence, read N- to C-terminus: MSTIVIFLAALLACSLLAGWLIKVRSRRRQLPWTNAFADAQTRKLTPEERSAVENYLESLTQVLQVPGPTGASAAPISLALNAESNNVMMLTHAITRYGISTDDPNKWRYYLDSVEVHLPPFWEQYINDENTVELIHTDSLPLVISLNGHTLQEYMQETRGYALQPVPSTQASIRGEESEQIELLNIRKETHEEYALSRPRGLREALLIVASFLMFFFCLITPDVFVPWLAGGALLLLGAGLWGLFAPPAKSSLREIHCLRGTPRRWGLFGENDQEQINNISLGIIDLVYPAHWQPYIAQDLGQQTDIDIYLDRHLVRQGRYLSLHDEVKNFPLQHWLRSTIIAAGSLLVLFMLLFWIPLDMPLKFTLSWMKGAQTIEATSVKQLADAGVRVGDTLRISGTGMCNIRTSGTWSAKTNSPFLPFDCSQIIWNDARSLPLPESELVNKATALTEAVNRQLHPKPEDESRVSASLRSAIQKSGMVLLDDFGDIVLKTADLCSAKDDCVRLKNALVNLGNSKDWDALVKRANAGKLDGVNVLLRPVSAESLDNLVATSTAPFITHETARAAQSLNSPAPGGFLIVSDEGSDFVDQPWPSASLYDYPPQEQWNAFQKLAQMLMHTPFNAEGIVTKIFTDANGTQHIGLHPIPDRSGLWRYLSTTLLLLTMLGSAIYNGVQAWRRYQRHRTRMMKIQAYYESCLNPQLITPSESLIE.

Position 1 (Met-1) is a topological domain, periplasmic. A helical transmembrane segment spans residues 2–22; the sequence is STIVIFLAALLACSLLAGWLI. The Cytoplasmic portion of the chain corresponds to 23–204; it reads KVRSRRRQLP…YALSRPRGLR (182 aa). 2 helical membrane passes run 205-225 and 226-246; these read EALL…TPDV and FVPW…WGLF. The Cytoplasmic segment spans residues 247 to 339; it reads APPAKSSLRE…KNFPLQHWLR (93 aa). Residues 340-360 traverse the membrane as a helical segment; it reads STIIAAGSLLVLFMLLFWIPL. Over 361–655 the chain is Periplasmic; sequence DMPLKFTLSW…IPDRSGLWRY (295 aa). Residues 656–676 form a helical membrane-spanning segment; it reads LSTTLLLLTMLGSAIYNGVQA. The Cytoplasmic segment spans residues 677–711; sequence WRRYQRHRTRMMKIQAYYESCLNPQLITPSESLIE.

Belongs to the IgaA family.

The protein resides in the cell inner membrane. The protein is Putative membrane protein IgaA homolog (yrfF) of Escherichia coli O157:H7.